A 909-amino-acid polypeptide reads, in one-letter code: E3 ubiquitin-protein ligase HACE1 (909 aa).

The interval 1–21 (MERAMEQLNRLTRSLRRARTV) is N-terminal helix important for homodimerization. 7 ANK repeats span residues 23 to 55 (LPEDNETAVYTLMPMVMADQHRSVSELLSNSKF), 64 to 93 (VKRSLLHIAANCGSVECLVLLLKKGANPNY), 97 to 126 (SGCTPLHLAARNGQKKCMSKLLEYSADVNI), 130 to 159 (EGLTAIHWLAVNGRTELLHDLVQHVTDVDV), 163 to 192 (MGQTALHVACQNGHKTTVQCLLDSGADINR), 196 to 226 (SGATPLYFACSHGQRDTAQILLLRGAKYLPD), and 228 to 253 (NGVTPLDLCVQGGYGQTCEVLIQYHP). Residues 398–433 (QDQEAPSLSAFEPPGPGSYESLPPGPGDSKPEVLAG) are disordered. An HECT domain is found at 574–909 (NCAKLKQGIA…HCGSYGYTMA (336 aa)). Cys-876 (glycyl thioester intermediate) is an active-site residue.

In terms of assembly, homodimer. The homodimer is autoinhibited and stabilized by its N-terminal helix. Interacts with RAB1 (RAB1A, RAB1B or RAB1C), RAB4 (RAB4A or RAB4B) and RAB11 (RAB11A or RAB11B); in a GTP-dependent manner. Interacts with the 26S proteasomal complex through the 20S core proteasomal subunit. Interacts with RARB. In terms of processing, autoubiquitinated.

The protein localises to the golgi apparatus. The protein resides in the golgi stack membrane. It is found in the cytoplasm. It localises to the endoplasmic reticulum. The enzyme catalyses S-ubiquitinyl-[E2 ubiquitin-conjugating enzyme]-L-cysteine + [acceptor protein]-L-lysine = [E2 ubiquitin-conjugating enzyme]-L-cysteine + N(6)-ubiquitinyl-[acceptor protein]-L-lysine.. It participates in protein modification; protein ubiquitination. Its activity is regulated as follows. Sterically autoinhibited in its dimeric state. Functionally, E3 ubiquitin-protein ligase involved in Golgi membrane fusion and regulation of small GTPases. Acts as a regulator of Golgi membrane dynamics during the cell cycle: recruited to Golgi membrane by Rab proteins and regulates postmitotic Golgi membrane fusion. Acts by mediating ubiquitination during mitotic Golgi disassembly, ubiquitination serving as a signal for Golgi reassembly later, after cell division. Specifically binds GTP-bound RAC1, mediating ubiquitination and subsequent degradation of active RAC1, thereby playing a role in host defense against pathogens. May also act as a transcription regulator via its interaction with RARB. This Mus musculus (Mouse) protein is E3 ubiquitin-protein ligase HACE1 (Hace1).